Consider the following 252-residue polypeptide: uncharacterized protein (252 aa).

The protein belongs to the LarE family.

This is an uncharacterized protein from Methanocaldococcus jannaschii (strain ATCC 43067 / DSM 2661 / JAL-1 / JCM 10045 / NBRC 100440) (Methanococcus jannaschii).